We begin with the raw amino-acid sequence, 495 residues long: Flagellin (495 aa).

It belongs to the bacterial flagellin family.

It is found in the secreted. Its subcellular location is the bacterial flagellum. Functionally, flagellin is the subunit protein which polymerizes to form the filaments of bacterial flagella. The protein is Flagellin (fliC) of Salmonella paratyphi A (strain ATCC 9150 / SARB42).